The following is a 284-amino-acid chain: 4-hydroxy-3-methylbut-2-enyl diphosphate reductase (284 aa).

C12 contacts [4Fe-4S] cluster. The (2E)-4-hydroxy-3-methylbut-2-enyl diphosphate site is built by H40 and H72. Residues H40 and H72 each coordinate dimethylallyl diphosphate. Isopentenyl diphosphate-binding residues include H40 and H72. A [4Fe-4S] cluster-binding site is contributed by C94. H122 is a (2E)-4-hydroxy-3-methylbut-2-enyl diphosphate binding site. H122 contacts dimethylallyl diphosphate. H122 contacts isopentenyl diphosphate. E124 functions as the Proton donor in the catalytic mechanism. T161 is a binding site for (2E)-4-hydroxy-3-methylbut-2-enyl diphosphate. C193 lines the [4Fe-4S] cluster pocket. (2E)-4-hydroxy-3-methylbut-2-enyl diphosphate is bound by residues S221, N223, and S264. Dimethylallyl diphosphate contacts are provided by S221, N223, and S264. S221, N223, and S264 together coordinate isopentenyl diphosphate.

It belongs to the IspH family. The cofactor is [4Fe-4S] cluster.

The catalysed reaction is isopentenyl diphosphate + 2 oxidized [2Fe-2S]-[ferredoxin] + H2O = (2E)-4-hydroxy-3-methylbut-2-enyl diphosphate + 2 reduced [2Fe-2S]-[ferredoxin] + 2 H(+). It catalyses the reaction dimethylallyl diphosphate + 2 oxidized [2Fe-2S]-[ferredoxin] + H2O = (2E)-4-hydroxy-3-methylbut-2-enyl diphosphate + 2 reduced [2Fe-2S]-[ferredoxin] + 2 H(+). The protein operates within isoprenoid biosynthesis; dimethylallyl diphosphate biosynthesis; dimethylallyl diphosphate from (2E)-4-hydroxy-3-methylbutenyl diphosphate: step 1/1. Its pathway is isoprenoid biosynthesis; isopentenyl diphosphate biosynthesis via DXP pathway; isopentenyl diphosphate from 1-deoxy-D-xylulose 5-phosphate: step 6/6. Catalyzes the conversion of 1-hydroxy-2-methyl-2-(E)-butenyl 4-diphosphate (HMBPP) into a mixture of isopentenyl diphosphate (IPP) and dimethylallyl diphosphate (DMAPP). Acts in the terminal step of the DOXP/MEP pathway for isoprenoid precursor biosynthesis. The polypeptide is 4-hydroxy-3-methylbut-2-enyl diphosphate reductase (Dehalococcoides mccartyi (strain ATCC BAA-2100 / JCM 16839 / KCTC 5957 / BAV1)).